The primary structure comprises 161 residues: ATP synthase subunit b' (161 aa).

The helical transmembrane segment at 30–47 (VMAIQFLVLAALLNKLFY) threads the bilayer.

Belongs to the ATPase B chain family. In terms of assembly, F-type ATPases have 2 components, F(1) - the catalytic core - and F(0) - the membrane proton channel. F(1) has five subunits: alpha(3), beta(3), gamma(1), delta(1), epsilon(1). F(0) has four main subunits: a(1), b(1), b'(1) and c(10-14). The alpha and beta chains form an alternating ring which encloses part of the gamma chain. F(1) is attached to F(0) by a central stalk formed by the gamma and epsilon chains, while a peripheral stalk is formed by the delta, b and b' chains.

It is found in the cellular thylakoid membrane. Functionally, f(1)F(0) ATP synthase produces ATP from ADP in the presence of a proton or sodium gradient. F-type ATPases consist of two structural domains, F(1) containing the extramembraneous catalytic core and F(0) containing the membrane proton channel, linked together by a central stalk and a peripheral stalk. During catalysis, ATP synthesis in the catalytic domain of F(1) is coupled via a rotary mechanism of the central stalk subunits to proton translocation. Component of the F(0) channel, it forms part of the peripheral stalk, linking F(1) to F(0). The b'-subunit is a diverged and duplicated form of b found in plants and photosynthetic bacteria. The polypeptide is ATP synthase subunit b' (Picosynechococcus sp. (strain ATCC 27264 / PCC 7002 / PR-6) (Agmenellum quadruplicatum)).